The following is a 180-amino-acid chain: Cytokinin-beta-glucosidase 4 (180 aa).

Hydrolyzes cytokinin glucosides thus liberating free cytokinins. This Panax ginseng (Korean ginseng) protein is Cytokinin-beta-glucosidase 4 (ROLC4).